Reading from the N-terminus, the 215-residue chain is 3,4-dihydroxy-2-butanone 4-phosphate synthase (215 aa).

D-ribulose 5-phosphate-binding positions include 38 to 39 (RE), Asp43, 151 to 155 (RRGHT), and Glu175. Glu39 is a binding site for Mg(2+). His154 is a Mg(2+) binding site.

This sequence belongs to the DHBP synthase family. In terms of assembly, homodimer. The cofactor is Mg(2+). It depends on Mn(2+) as a cofactor.

It carries out the reaction D-ribulose 5-phosphate = (2S)-2-hydroxy-3-oxobutyl phosphate + formate + H(+). It functions in the pathway cofactor biosynthesis; riboflavin biosynthesis; 2-hydroxy-3-oxobutyl phosphate from D-ribulose 5-phosphate: step 1/1. Catalyzes the conversion of D-ribulose 5-phosphate to formate and 3,4-dihydroxy-2-butanone 4-phosphate. The polypeptide is 3,4-dihydroxy-2-butanone 4-phosphate synthase (Haemophilus influenzae (strain PittGG)).